The following is a 256-amino-acid chain: F-actin-capping protein subunit beta (256 aa).

The residue at position 1 (Met-1) is an N-acetylmethionine.

Belongs to the F-actin-capping protein beta subunit family. Component of the F-actin capping complex, composed of a heterodimer of an alpha and a beta subunit.

It localises to the cytoplasm. It is found in the cytoskeleton. F-actin-capping proteins bind in a Ca(2+)-independent manner to the fast growing ends of actin filaments (barbed end) thereby blocking the exchange of subunits at these ends. Unlike other capping proteins (such as gelsolin and severin), these proteins do not sever actin filaments. This Arabidopsis thaliana (Mouse-ear cress) protein is F-actin-capping protein subunit beta.